A 479-amino-acid chain; its full sequence is ATP synthase subunit beta (479 aa).

ATP is bound at residue 168 to 175; it reads GGAGVGKT.

This sequence belongs to the ATPase alpha/beta chains family. F-type ATPases have 2 components, CF(1) - the catalytic core - and CF(0) - the membrane proton channel. CF(1) has five subunits: alpha(3), beta(3), gamma(1), delta(1), epsilon(1). CF(0) has three main subunits: a(1), b(2) and c(9-12). The alpha and beta chains form an alternating ring which encloses part of the gamma chain. CF(1) is attached to CF(0) by a central stalk formed by the gamma and epsilon chains, while a peripheral stalk is formed by the delta and b chains.

It is found in the cell membrane. The enzyme catalyses ATP + H2O + 4 H(+)(in) = ADP + phosphate + 5 H(+)(out). Functionally, produces ATP from ADP in the presence of a proton gradient across the membrane. The catalytic sites are hosted primarily by the beta subunits. The chain is ATP synthase subunit beta from Frankia casuarinae (strain DSM 45818 / CECT 9043 / HFP020203 / CcI3).